Consider the following 335-residue polypeptide: Nucleoid-associated protein YejK (335 aa).

The protein belongs to the YejK family.

The protein localises to the cytoplasm. The protein resides in the nucleoid. The sequence is that of Nucleoid-associated protein YejK from Salmonella schwarzengrund (strain CVM19633).